The primary structure comprises 387 residues: Phosphoglycerate kinase (387 aa).

Substrate is bound by residues 21-23 (DLN), Arg36, 59-62 (HLGR), Arg113, and Arg146. Residues Lys197, Glu314, and 340-343 (GGDT) contribute to the ATP site.

It belongs to the phosphoglycerate kinase family. In terms of assembly, monomer.

The protein localises to the cytoplasm. The enzyme catalyses (2R)-3-phosphoglycerate + ATP = (2R)-3-phospho-glyceroyl phosphate + ADP. It functions in the pathway carbohydrate degradation; glycolysis; pyruvate from D-glyceraldehyde 3-phosphate: step 2/5. The sequence is that of Phosphoglycerate kinase from Pseudomonas syringae pv. tomato (strain ATCC BAA-871 / DC3000).